A 178-amino-acid polypeptide reads, in one-letter code: Protamine-like protein (178 aa).

2 disordered regions span residues 1–27 (PSTTSSKSPKRRAKSPRRKRTGPTVSD) and 77–178 (SVVK…RAKK). Basic residues-rich tracts occupy residues 8 to 21 (SPKRRAKSPRRKRT) and 94 to 178 (PRRR…RAKK). The 69-residue stretch at 21–89 (TGPTVSDLIL…KAKGFYKLNK (69 aa)) folds into the H15 domain.

As to expression, male germ cells.

The protein localises to the nucleus. The protein resides in the chromosome. In terms of biological role, replaces histones in the chromatin of sperm during the haploid phase of spermatogenesis. Compacts sperm DNA into a highly condensed, stable and inactive complex. The chain is Protamine-like protein from Mullus surmuletus (Striped red mullet).